The primary structure comprises 721 residues: WD repeat and coiled-coil-containing protein (721 aa).

Met-1 carries the N-acetylmethionine modification. WD repeat units lie at residues Gly-55 to Ser-98 and Asn-154 to Cys-194. Phosphoserine is present on residues Ser-299, Ser-468, Ser-501, and Ser-523. Residues Gln-520–Leu-537 are compositionally biased toward polar residues. The interval Gln-520–Glu-553 is disordered. Thr-530 bears the Phosphothreonine mark. Residues Pro-539–Arg-545 are interaction with HCK. Residues Gln-556–Asn-584 adopt a coiled-coil conformation. Residues Ser-686 and Ser-690 each carry the phosphoserine modification.

In terms of assembly, oligomer. Interacts with HCK (via SH3 domain). In terms of processing, phosphorylated on Tyr when associated with HCK.

In Homo sapiens (Human), this protein is WD repeat and coiled-coil-containing protein.